The following is a 583-amino-acid chain: Pre-mRNA-processing protein PRP40 (583 aa).

WW domains lie at Met1 to Glu31 and Glu42 to Phe72. 6 FF domains span residues Lys132–Asn188, Thr201–Thr257, Gln262–Ile332, Arg354–Glu413, Gln427–Asn488, and Arg491–Glu552. A Phosphothreonine modification is found at Thr576.

The protein belongs to the PRPF40 family. As to quaternary structure, interacts with CRM1, MSL5, PRP8, and the RNA polymerase II largest subunit (RPB1). MSL5, MUD2 and PRP40 interact to form the commitment complex 2 (CC2), a precursor of mature spliceosomes.

It is found in the nucleus. In terms of biological role, required for pre-spliceosome formation, which is the first step of pre-mRNA splicing. This protein is associated with snRNP U1. Two commitment complexes, CC1 and CC2, have been defined in yeast. CC1 is a basal complex dependent only on the 5' splice site. CC2 is a complex of lower mobility and is dependent on a branchpoint as well as a 5' splice site region. This protein is involved in CC2 formation where it binds to the branchpoint binding protein MSL5, bridging the U1 snRNP-associated 5' splice site and the MSL5-associated branch point 3' intron splice site. The chain is Pre-mRNA-processing protein PRP40 (PRP40) from Saccharomyces cerevisiae (strain ATCC 204508 / S288c) (Baker's yeast).